A 569-amino-acid chain; its full sequence is Proline--tRNA ligase (569 aa).

The protein belongs to the class-II aminoacyl-tRNA synthetase family. ProS type 1 subfamily. As to quaternary structure, homodimer.

It is found in the cytoplasm. The enzyme catalyses tRNA(Pro) + L-proline + ATP = L-prolyl-tRNA(Pro) + AMP + diphosphate. In terms of biological role, catalyzes the attachment of proline to tRNA(Pro) in a two-step reaction: proline is first activated by ATP to form Pro-AMP and then transferred to the acceptor end of tRNA(Pro). As ProRS can inadvertently accommodate and process non-cognate amino acids such as alanine and cysteine, to avoid such errors it has two additional distinct editing activities against alanine. One activity is designated as 'pretransfer' editing and involves the tRNA(Pro)-independent hydrolysis of activated Ala-AMP. The other activity is designated 'posttransfer' editing and involves deacylation of mischarged Ala-tRNA(Pro). The misacylated Cys-tRNA(Pro) is not edited by ProRS. The polypeptide is Proline--tRNA ligase (Legionella pneumophila (strain Corby)).